Reading from the N-terminus, the 554-residue chain is MAFYRTPHDVTALPAWKALQQHREAMRGFSMSEAFAADAKRFDQFSLSACGLFLDYSKNLITEQSRDLLVNLANEVGLQDAIKSMFSGEIINASEGRPVLHTALRRPVGDKLSVNGVNVMPEVHKVLNQITELVGRIHDGLWRGYSEKPITDVVNIGIGGSFLGPELVSEALLPYAQRGVRCHYLANIDGSEFHELSANLRAETTLFIVSSKSFNTLETLKNAMAARTWYLAQGGSEAELYRHFIAVSSNKAAAVAFGIREENIFPMWDWVGGRYSLWSAIGLPIALAIGTANFKELLSGAYTMDQHFQTAPFDKNMPVLLALLGVWYGNFWDANSHAILPYDHYLRNITKHLQQLDMESNGKSVLQDGTPVKTDTGPVIWGGVGCNGQHAYHQLLHQGTQLIPADFIVPVVSFNPVADHHQWLYANCLSQSQALMLGKTREEAEAELRAKGLNEADIEKLAPHKVIPGNRPSNTLVVERISPRRLGALVAMYEHKVFVQSVIWGINAFDQWGVELGKELGKSVYQRLVGSLEDSAEDGSTQGLINYFRGKHRG.

Glu-359 acts as the Proton donor in catalysis. Catalysis depends on residues His-390 and Lys-518.

It belongs to the GPI family.

The protein localises to the cytoplasm. The catalysed reaction is alpha-D-glucose 6-phosphate = beta-D-fructose 6-phosphate. The protein operates within carbohydrate biosynthesis; gluconeogenesis. It functions in the pathway carbohydrate degradation; glycolysis; D-glyceraldehyde 3-phosphate and glycerone phosphate from D-glucose: step 2/4. Functionally, catalyzes the reversible isomerization of glucose-6-phosphate to fructose-6-phosphate. This is Glucose-6-phosphate isomerase 1 from Pseudomonas putida (strain ATCC 47054 / DSM 6125 / CFBP 8728 / NCIMB 11950 / KT2440).